We begin with the raw amino-acid sequence, 300 residues long: Movement protein (300 aa).

This sequence belongs to the alfamovirus movement protein family.

It is found in the host cell junction. The protein localises to the host plasmodesma. Functionally, transports viral genome to neighboring plant cells directly through plasmosdesmata, without any budding. The movement protein allows efficient cell to cell propagation, by bypassing the host cell wall barrier. Acts by forming a tubular structure at the host plasmodesmata, enlarging it enough to allow free passage of virion capsids. The protein is Movement protein of Alfalfa mosaic virus (AMV).